Consider the following 451-residue polypeptide: Chromosomal replication initiator protein DnaA (451 aa).

The domain I, interacts with DnaA modulators stretch occupies residues 1–94 (MKPDLSSLWQ…KPEPKPAQPS (94 aa)). The interval 87–106 (EPKPAQPSALPTHHNKEENK) is disordered. The tract at residues 95–113 (ALPTHHNKEENKPQTVIRS) is domain II. The tract at residues 114 to 331 (YLNPKHVFEN…GALNRVSANA (218 aa)) is domain III, AAA+ region. ATP is bound by residues Gly-159, Gly-161, Lys-162, and Thr-163. The segment at 332-451 (EFMGAAITID…WSNLIRTLSV (120 aa)) is domain IV, binds dsDNA.

Belongs to the DnaA family. Oligomerizes as a right-handed, spiral filament on DNA at oriC.

The protein localises to the cytoplasm. Its function is as follows. Plays an essential role in the initiation and regulation of chromosomal replication. ATP-DnaA binds to the origin of replication (oriC) to initiate formation of the DNA replication initiation complex once per cell cycle. Binds the DnaA box (a 9 base pair repeat at the origin) and separates the double-stranded (ds)DNA. Forms a right-handed helical filament on oriC DNA; dsDNA binds to the exterior of the filament while single-stranded (ss)DNA is stabiized in the filament's interior. The ATP-DnaA-oriC complex binds and stabilizes one strand of the AT-rich DNA unwinding element (DUE), permitting loading of DNA polymerase. After initiation quickly degrades to an ADP-DnaA complex that is not apt for DNA replication. Binds acidic phospholipids. The sequence is that of Chromosomal replication initiator protein DnaA from Pasteurella multocida (strain Pm70).